Here is a 319-residue protein sequence, read N- to C-terminus: UDP-3-O-acylglucosamine N-acyltransferase (319 aa).

Residue histidine 230 is the Proton acceptor of the active site.

Belongs to the transferase hexapeptide repeat family. LpxD subfamily. In terms of assembly, homotrimer.

It catalyses the reaction a UDP-3-O-[(3R)-3-hydroxyacyl]-alpha-D-glucosamine + a (3R)-hydroxyacyl-[ACP] = a UDP-2-N,3-O-bis[(3R)-3-hydroxyacyl]-alpha-D-glucosamine + holo-[ACP] + H(+). It participates in bacterial outer membrane biogenesis; LPS lipid A biosynthesis. Catalyzes the N-acylation of UDP-3-O-acylglucosamine using 3-hydroxyacyl-ACP as the acyl donor. Is involved in the biosynthesis of lipid A, a phosphorylated glycolipid that anchors the lipopolysaccharide to the outer membrane of the cell. The sequence is that of UDP-3-O-acylglucosamine N-acyltransferase from Campylobacter lari (strain RM2100 / D67 / ATCC BAA-1060).